The chain runs to 71 residues: Conotoxin LvVIB (71 aa).

An N-terminal signal peptide occupies residues 1–17; it reads VLIIAVLFLTASELVTA. Residues 18-41 constitute a propeptide that is removed on maturation; sequence DYTRDKWQYRAASLRDAMRNFRDT. 3 cysteine pairs are disulfide-bonded: C43/C57, C50/C62, and C56/C69.

Belongs to the conotoxin O1 superfamily. Expressed by the venom duct.

The protein resides in the secreted. The protein is Conotoxin LvVIB of Conus lividus (Livid cone).